Here is a 122-residue protein sequence, read N- to C-terminus: Large ribosomal subunit protein uL14 (122 aa).

The protein belongs to the universal ribosomal protein uL14 family. In terms of assembly, part of the 50S ribosomal subunit. Forms a cluster with proteins L3 and L19. In the 70S ribosome, L14 and L19 interact and together make contacts with the 16S rRNA in bridges B5 and B8.

Its function is as follows. Binds to 23S rRNA. Forms part of two intersubunit bridges in the 70S ribosome. This Campylobacter fetus subsp. fetus (strain 82-40) protein is Large ribosomal subunit protein uL14.